A 55-amino-acid chain; its full sequence is Large ribosomal subunit protein bL33 (55 aa).

This sequence belongs to the bacterial ribosomal protein bL33 family.

The sequence is that of Large ribosomal subunit protein bL33 from Burkholderia ambifaria (strain MC40-6).